The sequence spans 163 residues: Nucleotide-binding protein syc0675_c (163 aa).

It belongs to the YajQ family.

Functionally, nucleotide-binding protein. The protein is Nucleotide-binding protein syc0675_c of Synechococcus sp. (strain ATCC 27144 / PCC 6301 / SAUG 1402/1) (Anacystis nidulans).